The following is a 327-amino-acid chain: Ankyrin repeat domain-containing protein SOWAHD (327 aa).

Residues 1-31 (MAQALEDGNPLPKASNRPAESEAPSDPQIKD) form a disordered region. ANK repeat units lie at residues 112–141 (CLEP…AEPS), 147–162 (DPIT…AKHG), and 186–216 (PGSG…LGAD). Residues 251-311 (ERDRKRENAN…EKKASSTQEG (61 aa)) form a disordered region. Positions 260–275 (NNNSSRTTTTTTTTSR) are enriched in low complexity. Over residues 292–305 (HYKEASQPVKEKKA) the composition is skewed to basic and acidic residues.

Belongs to the SOWAH family.

The polypeptide is Ankyrin repeat domain-containing protein SOWAHD (Sowahd) (Mus musculus (Mouse)).